Here is a 551-residue protein sequence, read N- to C-terminus: Sialic acid-binding Ig-like lectin 5 (551 aa).

The signal sequence occupies residues 1–16 (MLPLLLLPLLWGGSLQ). Residues 17-441 (EKPVYELQVQ…LGTGVVPAAL (425 aa)) lie on the Extracellular side of the membrane. The Ig-like V-type domain occupies 19 to 136 (PVYELQVQKS…KYSYQQNKLN (118 aa)). 3 cysteine pairs are disulfide-bonded: Cys-36/Cys-170, Cys-41/Cys-101, and Cys-164/Cys-213. N-linked (GlcNAc...) asparagine glycosylation occurs at Asn-100. Residues Arg-119, Lys-127, and Ser-129 each coordinate N-acetylneuraminate. The 84-residue stretch at 146–229 (PDIHFLEPLE…AQVTTERTVQ (84 aa)) folds into the Ig-like C2-type 1 domain. The tract at residues 189 to 210 (DPETTRSSELTLTPRPEDHGTN) is disordered. N-linked (GlcNAc...) asparagine glycosylation is found at Asn-210, Asn-231, and Asn-253. Residues 236 to 330 (PQTITIFRNG…GFLQIFLNLS (95 aa)) enclose the Ig-like C2-type 2 domain. Cys-269 and Cys-314 are disulfide-bonded. N-linked (GlcNAc...) asparagine glycosylation is found at Asn-328, Asn-375, Asn-384, and Asn-393. The chain crosses the membrane as a helical span at residues 442-462 (GGAGVMALLCICLCLIFFLIV). At 463 to 551 (KARRKQAAGR…TEYSEIKTSK (89 aa)) the chain is on the cytoplasmic side. Positions 469–551 (AAGRPEKMDD…TEYSEIKTSK (83 aa)) are disordered. The short motif at 518-523 (LHYASL) is the ITIM motif element. Residues 528–537 (MKSREPKDQE) show a composition bias toward basic and acidic residues. An SLAM-like motif motif is present at residues 542–547 (TEYSEI).

The protein belongs to the immunoglobulin superfamily. SIGLEC (sialic acid binding Ig-like lectin) family. In terms of tissue distribution, expressed by monocytic/myeloid lineage cells. Found at high levels in peripheral blood leukocytes, spleen, bone marrow and at lower levels in lymph node, lung, appendix, placenta, pancreas and thymus. Expressed by monocytes and neutrophils but absent from leukemic cell lines representing early stages of myelomonocytic differentiation.

It localises to the membrane. In terms of biological role, putative adhesion molecule that mediates sialic-acid dependent binding to cells. Binds equally to alpha-2,3-linked and alpha-2,6-linked sialic acid. The sialic acid recognition site may be masked by cis interactions with sialic acids on the same cell surface. This Homo sapiens (Human) protein is Sialic acid-binding Ig-like lectin 5 (SIGLEC5).